The sequence spans 664 residues: Chaperone protein DnaK (664 aa).

At Thr-201 the chain carries Phosphothreonine; by autocatalysis. Disordered stretches follow at residues 516-538 (DAEKHKEEDKKRREASDARNEAD) and 578-664 (APVE…KPND). Over residues 578-592 (APVEKIKDASEELSR) the composition is skewed to basic and acidic residues. Low complexity-rich tracts occupy residues 600-617 (AMQSQSASAAASSAANAQ) and 638-649 (AGNSASSNSNNE).

Belongs to the heat shock protein 70 family.

Functionally, acts as a chaperone. The polypeptide is Chaperone protein DnaK (Chlamydia caviae (strain ATCC VR-813 / DSM 19441 / 03DC25 / GPIC) (Chlamydophila caviae)).